An 88-amino-acid polypeptide reads, in one-letter code: Small ribosomal subunit protein bS20 (88 aa).

A disordered region spans residues 1-23 (MANTSSAKKATRKIARRAAINKN).

Belongs to the bacterial ribosomal protein bS20 family.

In terms of biological role, binds directly to 16S ribosomal RNA. The chain is Small ribosomal subunit protein bS20 from Mesorhizobium japonicum (strain LMG 29417 / CECT 9101 / MAFF 303099) (Mesorhizobium loti (strain MAFF 303099)).